A 235-amino-acid chain; its full sequence is 1-(5-phosphoribosyl)-5-[(5-phosphoribosylamino)methylideneamino] imidazole-4-carboxamide isomerase (235 aa).

Asp8 (proton acceptor) is an active-site residue. Asp127 acts as the Proton donor in catalysis.

It belongs to the HisA/HisF family.

Its subcellular location is the cytoplasm. It catalyses the reaction 1-(5-phospho-beta-D-ribosyl)-5-[(5-phospho-beta-D-ribosylamino)methylideneamino]imidazole-4-carboxamide = 5-[(5-phospho-1-deoxy-D-ribulos-1-ylimino)methylamino]-1-(5-phospho-beta-D-ribosyl)imidazole-4-carboxamide. The protein operates within amino-acid biosynthesis; L-histidine biosynthesis; L-histidine from 5-phospho-alpha-D-ribose 1-diphosphate: step 4/9. This is 1-(5-phosphoribosyl)-5-[(5-phosphoribosylamino)methylideneamino] imidazole-4-carboxamide isomerase from Nautilia profundicola (strain ATCC BAA-1463 / DSM 18972 / AmH).